A 149-amino-acid chain; its full sequence is Nucleoside diphosphate kinase (149 aa).

ATP-binding residues include lysine 9, phenylalanine 57, arginine 85, threonine 91, arginine 102, and asparagine 112. The Pros-phosphohistidine intermediate role is filled by histidine 115.

Belongs to the NDK family. Homotetramer. Mg(2+) serves as cofactor.

It localises to the cytoplasm. It carries out the reaction a 2'-deoxyribonucleoside 5'-diphosphate + ATP = a 2'-deoxyribonucleoside 5'-triphosphate + ADP. The enzyme catalyses a ribonucleoside 5'-diphosphate + ATP = a ribonucleoside 5'-triphosphate + ADP. Functionally, major role in the synthesis of nucleoside triphosphates other than ATP. The ATP gamma phosphate is transferred to the NDP beta phosphate via a ping-pong mechanism, using a phosphorylated active-site intermediate. The sequence is that of Nucleoside diphosphate kinase from Staphylococcus haemolyticus (strain JCSC1435).